Reading from the N-terminus, the 304-residue chain is Protoheme IX farnesyltransferase (304 aa).

The next 9 membrane-spanning stretches (helical) occupy residues 31–51, 58–78, 99–119, 126–146, 154–174, 180–200, 222–242, 243–263, and 284–304; these read VNTLIVFCAVIGMFLAVPDGL, VAATLGIAFVAGAAAAMNCLI, LAPAETLLFAGVLGGTGLTVL, LTMWLTLATFVGYAVVYTVLL, IVIGGASGAMPPVLGWAAVTG, ALLLFLIIFAWTPPHFWALAL, FTRLSVLLYTCILFGVTLLPF, ATRMSGPLYLVCAVALGIGFL, and FSILYLFLLFAALLMDHYLPL.

It belongs to the UbiA prenyltransferase family. Protoheme IX farnesyltransferase subfamily.

It localises to the cell inner membrane. The enzyme catalyses heme b + (2E,6E)-farnesyl diphosphate + H2O = Fe(II)-heme o + diphosphate. It functions in the pathway porphyrin-containing compound metabolism; heme O biosynthesis; heme O from protoheme: step 1/1. Converts heme B (protoheme IX) to heme O by substitution of the vinyl group on carbon 2 of heme B porphyrin ring with a hydroxyethyl farnesyl side group. In Aromatoleum aromaticum (strain DSM 19018 / LMG 30748 / EbN1) (Azoarcus sp. (strain EbN1)), this protein is Protoheme IX farnesyltransferase.